The chain runs to 570 residues: Putative diflavin flavoprotein A 5 (570 aa).

A zinc metallo-hydrolase region spans residues 38-231 (ERGTTSNSYV…LQVRLYAVGH (194 aa)). The Flavodoxin-like domain maps to 260–402 (VALLYASAYG…VGTDFAQTLK (143 aa)). The segment at 421 to 570 (VGRIVGSVCV…INHRKTGNHY (150 aa)) is flavodoxin-reductase-like.

The protein in the N-terminal section; belongs to the zinc metallo-hydrolase group 3 family. In the C-terminal section; belongs to the flavodoxin reductase family. Fe cation is required as a cofactor.

Its function is as follows. Mediates electron transfer from NADH to oxygen, reducing it to water. This modular protein has 3 redox cofactors, in other organisms the same activity requires 2 or 3 proteins. This chain is Putative diflavin flavoprotein A 5 (dfa5), found in Nostoc sp. (strain PCC 7120 / SAG 25.82 / UTEX 2576).